The primary structure comprises 427 residues: Trigger factor (427 aa).

Residues 163-248 (GDTVVIDFVG…VNEVKAKELP (86 aa)) enclose the PPIase FKBP-type domain.

The protein belongs to the FKBP-type PPIase family. Tig subfamily.

The protein localises to the cytoplasm. The catalysed reaction is [protein]-peptidylproline (omega=180) = [protein]-peptidylproline (omega=0). In terms of biological role, involved in protein export. Acts as a chaperone by maintaining the newly synthesized protein in an open conformation. Functions as a peptidyl-prolyl cis-trans isomerase. The chain is Trigger factor from Lactococcus lactis subsp. cremoris (strain SK11).